Consider the following 268-residue polypeptide: MQEARKCWGCGLVAILREGCGKDFFMLTRTDIETNMFPAAGSPPVRWRISEGLVAYGQAVEEMEREVAAIAAGEADELVWLLEHPPLYTAGTSADVADLIEPDRFPVFATGRGGEYTYHGPGQRVVYVMLDLKRRRQDVRAYVAALEDVIIRTLDKMNVRGERREDRVGVWVRRPEKPLLPDGGMAEDKIAALGIRLRKWVSFHGLSINVDPDLSHFSGIVPCGISAYGVTSLVDLGLPVMIGDVDVLLREAFEEVFGPAVPETGAGG.

A BPL/LPL catalytic domain is found at 73–261; sequence GEADELVWLL…AFEEVFGPAV (189 aa). Substrate-binding positions include 112–119, 192–194, and 205–207; these read RGGEYTYH, ALG, and GLS. Residue Cys-223 is the Acyl-thioester intermediate of the active site.

The protein belongs to the LipB family.

The protein localises to the cytoplasm. The catalysed reaction is octanoyl-[ACP] + L-lysyl-[protein] = N(6)-octanoyl-L-lysyl-[protein] + holo-[ACP] + H(+). It functions in the pathway protein modification; protein lipoylation via endogenous pathway; protein N(6)-(lipoyl)lysine from octanoyl-[acyl-carrier-protein]: step 1/2. Its function is as follows. Catalyzes the transfer of endogenously produced octanoic acid from octanoyl-acyl-carrier-protein onto the lipoyl domains of lipoate-dependent enzymes. Lipoyl-ACP can also act as a substrate although octanoyl-ACP is likely to be the physiological substrate. The protein is Octanoyltransferase of Agrobacterium fabrum (strain C58 / ATCC 33970) (Agrobacterium tumefaciens (strain C58)).